The following is a 154-amino-acid chain: MKTFSAKPAEVTKKWVLIDAKGLVVGRLATIVAMRLRGKHLPTYTPHVDCGDNVIIINAQHAVLTGRKREQKTYYKHTGYVGHVKERTARQILEGKHPERVLEKAVERMIPRGPLGRVQMGNLRVYGGADHPHEAQQPEKIDIAKLNRKNTRAA.

Belongs to the universal ribosomal protein uL13 family. As to quaternary structure, part of the 50S ribosomal subunit.

In terms of biological role, this protein is one of the early assembly proteins of the 50S ribosomal subunit, although it is not seen to bind rRNA by itself. It is important during the early stages of 50S assembly. The sequence is that of Large ribosomal subunit protein uL13 from Bradyrhizobium diazoefficiens (strain JCM 10833 / BCRC 13528 / IAM 13628 / NBRC 14792 / USDA 110).